The primary structure comprises 130 residues: Blasticidin-S deaminase (130 aa).

Residues 1-129 (MPLSQEESTL…ELLPSGYMNR (129 aa)) enclose the CMP/dCMP-type deaminase domain. Ser28 lines the substrate pocket. Residue Cys54 participates in Zn(2+) binding. Glu56 (proton donor) is an active-site residue. Arg82 contacts substrate. The Zn(2+) site is built by Cys88 and Cys91. Tyr126 contacts substrate.

The protein belongs to the cytidine and deoxycytidylate deaminase family. As to quaternary structure, homotetramer. It depends on Zn(2+) as a cofactor.

The enzyme catalyses blasticidin S + H2O + H(+) = deaminohydroxyblasticidin S + NH4(+). Catalyzes the deamination of the cytosine moiety of the antibiotics blasticidin S, cytomycin and acetylblasticidin S. The protein is Blasticidin-S deaminase (bsd) of Aspergillus terreus (strain NIH 2624 / FGSC A1156).